A 436-amino-acid chain; its full sequence is Adenylyltransferase and sulfurtransferase UBA4 (436 aa).

ATP contacts are provided by residues G74, D95, 102–106 (SNLHR), K119, and 163–164 (DT). Zn(2+) is bound by residues C205 and C208. C222 functions as the Glycyl thioester intermediate; for adenylyltransferase activity in the catalytic mechanism. C283 and C286 together coordinate Zn(2+). The Rhodanese domain maps to 335 to 434 (NEKDHILIDV…YIDEEDHSYP (100 aa)). C393 serves as the catalytic Cysteine persulfide intermediate; for sulfurtransferase activity.

In the N-terminal section; belongs to the HesA/MoeB/ThiF family. UBA4 subfamily. Zn(2+) is required as a cofactor.

Its subcellular location is the cytoplasm. It is found in the cytosol. Its pathway is tRNA modification; 5-methoxycarbonylmethyl-2-thiouridine-tRNA biosynthesis. Its function is as follows. Plays a central role in 2-thiolation of mcm(5)S(2)U at tRNA wobble positions of cytosolic tRNA(Lys), tRNA(Glu) and tRNA(Gln). Acts by mediating the C-terminal thiocarboxylation of sulfur carrier URM1. Its N-terminus first activates URM1 as acyl-adenylate (-COAMP), then the persulfide sulfur on the catalytic cysteine is transferred to URM1 to form thiocarboxylation (-COSH) of its C-terminus. The reaction probably involves hydrogen sulfide that is generated from the persulfide intermediate and that acts as a nucleophile towards URM1. Subsequently, a transient disulfide bond is formed. Does not use thiosulfate as sulfur donor; NFS1 probably acting as a sulfur donor for thiocarboxylation reactions. Prior mcm(5) tRNA modification by the elongator complex is required for 2-thiolation. May also be involved in protein urmylation. This Vanderwaltozyma polyspora (strain ATCC 22028 / DSM 70294 / BCRC 21397 / CBS 2163 / NBRC 10782 / NRRL Y-8283 / UCD 57-17) (Kluyveromyces polysporus) protein is Adenylyltransferase and sulfurtransferase UBA4.